A 330-amino-acid polypeptide reads, in one-letter code: Ketol-acid reductoisomerase (NADP(+)) (330 aa).

Residues 3-184 form the KARI N-terminal Rossmann domain; the sequence is LPVYYDKDID…GGGRMGVLET (182 aa). NADP(+)-binding positions include 26–29, S52, and S54; that span reads YGAQ. The active site involves H109. G135 lines the NADP(+) pocket. A KARI C-terminal knotted domain is found at 185 to 329; it reads SFKEECESDL…EILRAPFNHK (145 aa). Mg(2+) contacts are provided by D193, E197, E229, and E233. S254 is a binding site for substrate.

The protein belongs to the ketol-acid reductoisomerase family. Requires Mg(2+) as cofactor.

The enzyme catalyses (2R)-2,3-dihydroxy-3-methylbutanoate + NADP(+) = (2S)-2-acetolactate + NADPH + H(+). The catalysed reaction is (2R,3R)-2,3-dihydroxy-3-methylpentanoate + NADP(+) = (S)-2-ethyl-2-hydroxy-3-oxobutanoate + NADPH + H(+). The protein operates within amino-acid biosynthesis; L-isoleucine biosynthesis; L-isoleucine from 2-oxobutanoate: step 2/4. Its pathway is amino-acid biosynthesis; L-valine biosynthesis; L-valine from pyruvate: step 2/4. Functionally, involved in the biosynthesis of branched-chain amino acids (BCAA). Catalyzes an alkyl-migration followed by a ketol-acid reduction of (S)-2-acetolactate (S2AL) to yield (R)-2,3-dihydroxy-isovalerate. In the isomerase reaction, S2AL is rearranged via a Mg-dependent methyl migration to produce 3-hydroxy-3-methyl-2-ketobutyrate (HMKB). In the reductase reaction, this 2-ketoacid undergoes a metal-dependent reduction by NADPH to yield (R)-2,3-dihydroxy-isovalerate. The sequence is that of Ketol-acid reductoisomerase (NADP(+)) from Helicobacter pylori (strain Shi470).